A 744-amino-acid polypeptide reads, in one-letter code: Prestin (744 aa).

At 1–75 (MDHAEENEIL…PITKWLPAYK (75 aa)) the chain is on the cytoplasmic side. The chain crosses the membrane as a helical span at residues 76–105 (FKEYVLGDLVSGISTGVLQLPQGLAFAMLA). Residues 106-108 (AVP) are Extracellular-facing. A helical transmembrane segment spans residues 109 to 126 (PIFGLYSSFYPVIMYCFL). Topologically, residues 127–137 (GTSRHISIGPF) are cytoplasmic. A helical membrane pass occupies residues 138–151 (AVISLMIGGVAVRL). Over 152 to 168 (VPDDIVIPGGVNATNGT) the chain is Extracellular. Positions 158–168 (IPGGVNATNGT) match the Involved in motor function motif. Asn-163 and Asn-166 each carry an N-linked (GlcNAc...) asparagine glycan. Residues 169–196 (EARDALRVKVAMSVTLLSGIIQFCLGVC) traverse the membrane as a helical segment. The Cytoplasmic segment spans residues 197-206 (RFGFVAIYLT). A helical membrane pass occupies residues 207 to 230 (EPLVRGFTTAAAVHVFTSMLKYLF). At 231 to 241 (GVKTKRYSGIF) the chain is on the extracellular side. The helical intramembrane region spans 242–253 (SVVYSTVAVLQN). The Extracellular segment spans residues 254 to 258 (VKNLN). A helical transmembrane segment spans residues 259-282 (VCSLGVGLMVFGLLLGGKEFNERF). Residues 283-291 (KEKLPAPIP) lie on the Cytoplasmic side of the membrane. The helical transmembrane segment at 292 to 307 (LEFFAVVMGTGISAGF) threads the bilayer. The Extracellular portion of the chain corresponds to 308-332 (NLKESYNVDVVGTLPLGLLPPANPD). The chain crosses the membrane as a helical span at residues 333–367 (TSLFHLVYVDAIAIAIVGFSVTISMAKTLANKHGY). Topologically, residues 368–370 (QVD) are cytoplasmic. A helical transmembrane segment spans residues 371 to 388 (GNQELIALGLCNSIGSLF). Residues 389-396 (QTFSISCS) lie on the Extracellular side of the membrane. Residues 397–406 (LSRSLVQEGT) traverse the membrane as a helical segment. Position 398 (Ser-398) interacts with salicylate. The Cytoplasmic portion of the chain corresponds to 407–410 (GGKT). The chain crosses the membrane as a helical span at residues 411 to 432 (QLAGCLASLMILLVILATGFLF). Residues 433 to 436 (ESLP) lie on the Extracellular side of the membrane. The helical transmembrane segment at 437-464 (QAVLSAIVIVNLKGMFMQFSDLPFFWRT) threads the bilayer. Ser-465 is a topological domain (cytoplasmic). The chain crosses the membrane as a helical span at residues 466–481 (KIELTIWLTTFVSSLF). Topologically, residues 482–483 (LG) are extracellular. The chain crosses the membrane as a helical span at residues 484–504 (LDYGLITAVIIALLTVIYRTQ). The extended region for STAS domain stretch occupies residues 505-718 (SPSYKVLGKL…AVLGSQLREA (214 aa)). At 505-744 (SPSYKVLGKL…PNATPATPEA (240 aa)) the chain is on the cytoplasmic side. Residues 525–713 (AYEEVKEIPG…HSIHDAVLGS (189 aa)) form the STAS domain. The disordered stretch occupies residues 718 to 744 (ALAEQEASAPPSQEDLEPNATPATPEA).

This sequence belongs to the SLC26A/SulP transporter (TC 2.A.53) family. In terms of assembly, homodimer. Interacts (via STAS domain) with CALM; this interaction is calcium-dependent and the STAS domain interacts with only one lobe of CALM which is an elongated conformation. Interacts with MYH1.

The protein resides in the lateral cell membrane. It carries out the reaction 2 hydrogencarbonate(in) + chloride(out) = 2 hydrogencarbonate(out) + chloride(in). Voltage-sensitive motor protein that drives outer hair cell (OHC) electromotility (eM) and participates in sound amplification in the hearing organ. Converts changes in the transmembrane electric potential into mechanical displacements resulting in the coupling of its expansion to movement of a charged voltage sensor across the lipid membrane. The nature of the voltage sensor is not completely clear, and two models compete. In the first model, acts as an incomplete transporter where intracellular chloride anion acts as extrinsic voltage sensor that drives conformational change in the protein which is sufficient to produce a length change in the plane of the membrane and hence in the length of the OHC. The second model in which multiple charged amino acid residues are distributed at the intracellular and extracellular membrane interfaces that form an intrinsic voltage sensor, whose movement produces the non-linear capacitance (NLC). However, the effective voltage sensor may be the result of a hybrid voltage sensor, assembled from intrinsic charge (charged residues) and extrinsic charge (bound anion). Notably, binding of anions to the anion-binding pocket partially neutralizes the intrinsic positive charge rather than to form an electrically negative sensor, therefore remaining charge may serve as voltage sensor that, after depolarization, moves from down (expanded state) to up (contracted) conformation, which is accompanied by an eccentric contraction of the intermembrane cross-sectional area of the protein as well as a major increase in the hydrophobic thickness of the protein having as consequences the plasma membrane thickening and the cell contraction after membrane depolarization. The anion-binding pocket transits from the inward-open (Down) state, where it is exposed toward the intracellular solvent in the absence of anion, to the occluded (Up) state upon anion binding. Salicylate competes for the anion-binding site and inhibits the voltage-sensor movement, and therefore inhibits the charge transfer and electromotility by displacing Cl(-) from the anion-binding site and by preventing the structural transitions to the contracted state. In addition, can act as a weak Cl(-)/HCO3(-) antiporter across the cell membrane and so regulate the intracellular pH of the outer hair cells (OHCs), while firstly found as being unable to mediate electrogenic anion transport. Moreover, supports a role in cardiac mechanical amplification serving as an elastic element to enhance the actomyosin- based sarcomere contraction system. The polypeptide is Prestin (Homo sapiens (Human)).